A 334-amino-acid polypeptide reads, in one-letter code: Aspartate carbamoyltransferase catalytic subunit (334 aa).

Arg71 and Thr72 together coordinate carbamoyl phosphate. An L-aspartate-binding site is contributed by Lys99. Positions 121, 151, and 154 each coordinate carbamoyl phosphate. The L-aspartate site is built by Arg184 and Arg239. Gly280 and Pro281 together coordinate carbamoyl phosphate.

The protein belongs to the aspartate/ornithine carbamoyltransferase superfamily. ATCase family. As to quaternary structure, heterododecamer (2C3:3R2) of six catalytic PyrB chains organized as two trimers (C3), and six regulatory PyrI chains organized as three dimers (R2).

The enzyme catalyses carbamoyl phosphate + L-aspartate = N-carbamoyl-L-aspartate + phosphate + H(+). Its pathway is pyrimidine metabolism; UMP biosynthesis via de novo pathway; (S)-dihydroorotate from bicarbonate: step 2/3. Functionally, catalyzes the condensation of carbamoyl phosphate and aspartate to form carbamoyl aspartate and inorganic phosphate, the committed step in the de novo pyrimidine nucleotide biosynthesis pathway. The protein is Aspartate carbamoyltransferase catalytic subunit of Pseudomonas fluorescens (strain Pf0-1).